A 342-amino-acid chain; its full sequence is Paired box protein Pax-9 (342 aa).

The paired DNA-binding region spans 4 to 130; it reads AFGEVNQLGG…SSISRILRNK (127 aa). Positions 7-63 are PAI subdomain; that stretch reads EVNQLGGVFVNGRPLPNAIRLRIVELAQLGIRPCDISRQLRVSHGCVSKILARYNET. The RED subdomain stretch occupies residues 82–130; sequence TVVKHIRTYKQRDPGIFAWEIRDRLLADGVCDKYNVPSVSSISRILRNK. Residues 168–189 form an interaction with KDM5B region; that stretch reads AAAAKVPTPPGVPAIPGSVALP.

Interacts with KDM5B. In the embryo, expressed in pharyngeal pouches and derivatives, developing vertebral column, tail, head and limbs.

The protein localises to the nucleus. In terms of biological role, transcription factor required for normal development of thymus, parathyroid glands, ultimobranchial bodies, teeth, skeletal elements of skull and larynx as well as distal limbs. This Mus musculus (Mouse) protein is Paired box protein Pax-9 (Pax9).